We begin with the raw amino-acid sequence, 116 residues long: Large ribosomal subunit protein bL19 (116 aa).

It belongs to the bacterial ribosomal protein bL19 family.

This protein is located at the 30S-50S ribosomal subunit interface and may play a role in the structure and function of the aminoacyl-tRNA binding site. This Actinobacillus succinogenes (strain ATCC 55618 / DSM 22257 / CCUG 43843 / 130Z) protein is Large ribosomal subunit protein bL19.